The primary structure comprises 386 residues: Heavy metal-associated isoprenylated plant protein 5 (386 aa).

Residues 1–16 (MGEVQEGPKVEQEKKP) show a composition bias toward basic and acidic residues. The tract at residues 1-40 (MGEVQEGPKVEQEKKPAATVVPVETTDGKPKSGGGDSAAA) is disordered. The region spanning 49 to 112 (VSAFVYKVDM…KLEEKTKRKV (64 aa)) is the HMA 1 domain. 2 residues coordinate a metal cation: Cys60 and Cys63. Positions 129-153 (VGEKKADGGDKEAAPPAPAPAAPKE) are disordered. Positions 130–141 (GEKKADGGDKEA) are enriched in basic and acidic residues. One can recognise an HMA 2 domain in the interval 153 to 220 (ESVVPLKIRL…KLKRTVEPLV (68 aa)). Residues Cys164 and Cys167 each coordinate a metal cation. Composition is skewed to basic and acidic residues over residues 223 to 245 (KKDD…KKEA) and 252 to 297 (EAKK…KKDG). Residues 223–301 (KKDDGAAENK…EKKKDGGGVP (79 aa)) are disordered. A Cysteine methyl ester modification is found at Cys383. Residue Cys383 is the site of S-farnesyl cysteine attachment. A propeptide spans 384-386 (SVM) (removed in mature form).

Belongs to the HIPP family. Post-translationally, efficiently farnesylated in vitro.

Its function is as follows. Heavy-metal-binding protein. Involved in disease resistance. The chain is Heavy metal-associated isoprenylated plant protein 5 from Arabidopsis thaliana (Mouse-ear cress).